A 571-amino-acid chain; its full sequence is Proline--tRNA ligase (571 aa).

Belongs to the class-II aminoacyl-tRNA synthetase family. ProS type 1 subfamily. As to quaternary structure, homodimer.

It is found in the cytoplasm. The catalysed reaction is tRNA(Pro) + L-proline + ATP = L-prolyl-tRNA(Pro) + AMP + diphosphate. Catalyzes the attachment of proline to tRNA(Pro) in a two-step reaction: proline is first activated by ATP to form Pro-AMP and then transferred to the acceptor end of tRNA(Pro). As ProRS can inadvertently accommodate and process non-cognate amino acids such as alanine and cysteine, to avoid such errors it has two additional distinct editing activities against alanine. One activity is designated as 'pretransfer' editing and involves the tRNA(Pro)-independent hydrolysis of activated Ala-AMP. The other activity is designated 'posttransfer' editing and involves deacylation of mischarged Ala-tRNA(Pro). The misacylated Cys-tRNA(Pro) is not edited by ProRS. The polypeptide is Proline--tRNA ligase (Pseudomonas putida (strain GB-1)).